Reading from the N-terminus, the 113-residue chain is UPF0122 protein SSU98_0878 (113 aa).

It belongs to the UPF0122 family.

Functionally, might take part in the signal recognition particle (SRP) pathway. This is inferred from the conservation of its genetic proximity to ftsY/ffh. May be a regulatory protein. This chain is UPF0122 protein SSU98_0878, found in Streptococcus suis (strain 98HAH33).